Here is a 78-residue protein sequence, read N- to C-terminus: WAP four-disulfide core domain protein 12 (78 aa).

An N-terminal signal peptide occupies residues 1 to 21 (MWPNSILVLTVLLISSTLVTG). The WAP domain maps to 25–72 (KGAEKGVCPPDNVRCIRGEDPQCHNDNDCKDQKICCYWHCGFKCVQPV). 4 disulfide bridges follow: Cys-32-Cys-60, Cys-39-Cys-64, Cys-47-Cys-59, and Cys-53-Cys-68.

It is found in the secreted. Functionally, antibacterial protein. Putative acid-stable proteinase inhibitor. In Rattus norvegicus (Rat), this protein is WAP four-disulfide core domain protein 12.